Consider the following 70-residue polypeptide: MIYKVLFQADKTQSPLREATKSLYLEANSAVEARQLVEDNTPYNIEFVQELTGEHLAYEQESEDFKLTEF.

This sequence belongs to the RNA polymerase subunit epsilon family. As to quaternary structure, RNAP is composed of a core of 2 alpha, a beta and a beta' subunit. The core is associated with a delta subunit, and at least one of epsilon or omega. When a sigma factor is associated with the core the holoenzyme is formed, which can initiate transcription.

It carries out the reaction RNA(n) + a ribonucleoside 5'-triphosphate = RNA(n+1) + diphosphate. A non-essential component of RNA polymerase (RNAP). This is DNA-directed RNA polymerase subunit epsilon from Latilactobacillus sakei subsp. sakei (strain 23K) (Lactobacillus sakei subsp. sakei).